The chain runs to 122 residues: Large ribosomal subunit protein uL14 (122 aa).

The protein belongs to the universal ribosomal protein uL14 family. Part of the 50S ribosomal subunit. Forms a cluster with proteins L3 and L19. In the 70S ribosome, L14 and L19 interact and together make contacts with the 16S rRNA in bridges B5 and B8.

Functionally, binds to 23S rRNA. Forms part of two intersubunit bridges in the 70S ribosome. The sequence is that of Large ribosomal subunit protein uL14 from Endomicrobium trichonymphae.